Here is a 123-residue protein sequence, read N- to C-terminus: MPTMKQLIRNTRQPIRNVTKSPALQGCPQRRGTCTRVYTITPKKPNSALRKVARVRLTSGFEITAYIPGIGHNLQEHSVVLVRGGRVKDLPGVRYHIVRGTLDAVGVKDRQQGRSKYGAKKPK.

The protein belongs to the universal ribosomal protein uS12 family. Part of the 30S ribosomal subunit.

The protein localises to the plastid. It localises to the chloroplast. In terms of biological role, with S4 and S5 plays an important role in translational accuracy. Located at the interface of the 30S and 50S subunits. In Phaseolus vulgaris (Kidney bean), this protein is Small ribosomal subunit protein uS12cz/uS12cy (rps12-A).